A 370-amino-acid chain; its full sequence is MEEQTILRKFEHIKHCLTKNVEAHVTNGFEDVHLIHKSLPEIDKDEIDLSVKFLGRKFDYPIMITGMTGGTRKGEIAWRINRTLAQAAQELNIPLGLGSQRAMIEKPETWESYYVRDVAPDVFLVGNLGAPQFGRNAKKRYSVDEVLYAIEKIEADAIAIHMNPLQESIQPEGDTTFSGVLEALAEITSTIDYPVIAKETGAGVSKEVAVELEAVGVDAIDISGLGGTSWSAVEYYRTKDGEKRNLALKFWDWGIKTAISLAEVRWATNLPIIASGGMRDGITMAKALAMGASMVGIALPVLRPAAKGDVEGVIRIIKGYAEEIRNVMFLVGARNIKELRKVPLVITGFVREWLLQRIDLNSYLRARFKM.

8 to 9 serves as a coordination point for substrate; sequence RK. FMN is bound by residues threonine 65, 66–68, serine 99, and asparagine 127; that span reads GMT. Position 99 to 101 (99 to 101) interacts with substrate; that stretch reads SQR. Glutamine 166 provides a ligand contact to substrate. Glutamate 167 is a binding site for Mg(2+). Residues lysine 198, serine 223, threonine 228, 277 to 279, and 298 to 299 contribute to the FMN site; these read GMR and AL.

It belongs to the IPP isomerase type 2 family. In terms of assembly, homooctamer. Dimer of tetramers. FMN serves as cofactor. It depends on NADPH as a cofactor. Requires Mg(2+) as cofactor.

The protein localises to the cytoplasm. The catalysed reaction is isopentenyl diphosphate = dimethylallyl diphosphate. Involved in the biosynthesis of isoprenoids. Catalyzes the 1,3-allylic rearrangement of the homoallylic substrate isopentenyl (IPP) to its allylic isomer, dimethylallyl diphosphate (DMAPP). This is Isopentenyl-diphosphate delta-isomerase from Pyrococcus abyssi (strain GE5 / Orsay).